A 460-amino-acid polypeptide reads, in one-letter code: Elongation factor 1-alpha-A (460 aa).

A N,N,N-trimethylglycine modification is found at glycine 2. Lysine 3 carries the post-translational modification N6,N6-dimethyllysine; alternate. The residue at position 3 (lysine 3) is an N6-methyllysine; alternate. The region spanning 5–240 (KGHINVVVIG…DSIEPPARPT (236 aa)) is the tr-type G domain. Residues 14 to 21 (GHVDSGKS) form a G1 region. Position 14–21 (14–21 (GHVDSGKS)) interacts with GTP. At lysine 30 the chain carries N6-methyllysine. Positions 70–74 (GITID) are G2. At lysine 79 the chain carries N6,N6,N6-trimethyllysine. Residues 91–94 (DAPG) are G3. GTP is bound by residues 91–95 (DAPGH) and 153–156 (NKMD). The tract at residues 153–156 (NKMD) is G4. Residues 192–194 (SGF) form a G5 region. N6,N6-dimethyllysine; alternate is present on lysine 316. Lysine 316 is modified (N6-methyllysine; alternate). N6-methyllysine is present on lysine 390.

Belongs to the TRAFAC class translation factor GTPase superfamily. Classic translation factor GTPase family. EF-Tu/EF-1A subfamily.

The protein localises to the cytoplasm. Functionally, this protein promotes the GTP-dependent binding of aminoacyl-tRNA to the A-site of ribosomes during protein biosynthesis. In Schizosaccharomyces pombe (strain 972 / ATCC 24843) (Fission yeast), this protein is Elongation factor 1-alpha-A (tef101).